A 213-amino-acid polypeptide reads, in one-letter code: Orotate phosphoribosyltransferase (213 aa).

Lysine 26 lines the 5-phospho-alpha-D-ribose 1-diphosphate pocket. Residue 34-35 coordinates orotate; sequence FF. 5-phospho-alpha-D-ribose 1-diphosphate contacts are provided by residues 72-73, arginine 99, lysine 100, lysine 103, histidine 105, and 124-132; these read YK and DDVITAGTA. Positions 128 and 156 each coordinate orotate.

This sequence belongs to the purine/pyrimidine phosphoribosyltransferase family. PyrE subfamily. As to quaternary structure, homodimer. Mg(2+) is required as a cofactor.

The catalysed reaction is orotidine 5'-phosphate + diphosphate = orotate + 5-phospho-alpha-D-ribose 1-diphosphate. The protein operates within pyrimidine metabolism; UMP biosynthesis via de novo pathway; UMP from orotate: step 1/2. Functionally, catalyzes the transfer of a ribosyl phosphate group from 5-phosphoribose 1-diphosphate to orotate, leading to the formation of orotidine monophosphate (OMP). The chain is Orotate phosphoribosyltransferase from Escherichia coli O45:K1 (strain S88 / ExPEC).